The following is a 58-amino-acid chain: Proteinase inhibitor PSKP-1 (58 aa).

The Kazal-like domain occupies 1-58 (VIEPKCYKYEGKKCPPDINPVCGTDKRTYYNECALCVFIRQSTKKADKAIKIKKWGKC). Cystine bridges form between Cys-6/Cys-36, Cys-14/Cys-33, and Cys-22/Cys-58.

Monomer. As to expression, skin.

It is found in the secreted. Functionally, has antibacterial activity against Gram-negative bacterium E.coli ATCC 11229. Shows hemagglutinating activity. Inhibits prolyl endopeptidase, but not trypsin, chymotrypsin, V8 protease and proteinase K. May have a role in mucosal defense against microbes by interacting directly with their membranes. This chain is Proteinase inhibitor PSKP-1, found in Phyllomedusa sauvagei (Sauvage's leaf frog).